The sequence spans 102 residues: Legumin-like protein Mac i 2 (102 aa).

This sequence belongs to the 11S seed storage protein (globulins) family.

Seed storage protein. This is Legumin-like protein Mac i 2 from Macadamia integrifolia (Macadamia nut).